The sequence spans 201 residues: Endoribonuclease YbeY (201 aa).

Residues H156, H160, and H166 each coordinate Zn(2+).

It belongs to the endoribonuclease YbeY family. Zn(2+) is required as a cofactor.

It is found in the cytoplasm. Its function is as follows. Single strand-specific metallo-endoribonuclease involved in late-stage 70S ribosome quality control and in maturation of the 3' terminus of the 16S rRNA. This chain is Endoribonuclease YbeY, found in Cupriavidus pinatubonensis (strain JMP 134 / LMG 1197) (Cupriavidus necator (strain JMP 134)).